The following is a 43-amino-acid chain: Potassium channel toxin gamma-KTx 4.6 (43 aa).

Disulfide bonds link Cys-5–Cys-23, Cys-11–Cys-34, Cys-20–Cys-39, and Cys-24–Cys-41.

This sequence belongs to the ergtoxin family. Gamma-KTx 4 subfamily. Expressed by the venom gland.

It localises to the secreted. In terms of biological role, reversibly blocks Kv11/ERG potassium channels. The sequence is that of Potassium channel toxin gamma-KTx 4.6 from Centruroides limpidus (Mexican scorpion).